The sequence spans 461 residues: Cyclic 2,3-diphosphoglycerate synthetase (461 aa).

Belongs to the cyclic 2,3-diphosphoglycerate synthetase family.

It localises to the cytoplasm. It catalyses the reaction (2R)-2,3-bisphosphoglycerate + ATP + H(+) = cyclic (2R)-2,3-bisphosphoglycerate + ADP + phosphate. Functionally, catalyzes the formation of cyclic 2,3-diphosphoglycerate (cDPG) by formation of an intramolecular phosphoanhydride bond at the expense of ATP. The protein is Cyclic 2,3-diphosphoglycerate synthetase of Methanosphaera stadtmanae (strain ATCC 43021 / DSM 3091 / JCM 11832 / MCB-3).